The chain runs to 258 residues: Acetylglutamate kinase (258 aa).

Substrate-binding positions include glycine 41 to glycine 42, arginine 63, and asparagine 156.

This sequence belongs to the acetylglutamate kinase family. ArgB subfamily.

The protein resides in the cytoplasm. The catalysed reaction is N-acetyl-L-glutamate + ATP = N-acetyl-L-glutamyl 5-phosphate + ADP. Its pathway is amino-acid biosynthesis; L-arginine biosynthesis; N(2)-acetyl-L-ornithine from L-glutamate: step 2/4. Its function is as follows. Catalyzes the ATP-dependent phosphorylation of N-acetyl-L-glutamate. The sequence is that of Acetylglutamate kinase from Geobacillus thermodenitrificans (strain NG80-2).